The sequence spans 248 residues: ATP synthase subunit a (248 aa).

The propeptide at 1 to 3 (MLY) is removed in mature form. 7 helical membrane-spanning segments follow: residues 24 to 44 (MSLT…FFIF), 86 to 106 (IYMP…LVGL), 117 to 137 (FALP…IGFV), 146 to 166 (VLLP…VELL), 183 to 203 (ITSG…TSGI), 205 to 225 (LLFV…ELIV), and 227 to 247 (ILQA…SLIL).

Belongs to the ATPase A chain family. In terms of assembly, F-type ATPases have 2 components, CF(1) - the catalytic core - and CF(0) - the membrane proton channel. CF(1) has five subunits: alpha(3), beta(3), gamma(1), delta(1), epsilon(1). CF(0) has three main subunits: a, b and c.

Its subcellular location is the mitochondrion inner membrane. Functionally, mitochondrial membrane ATP synthase (F(1)F(0) ATP synthase or Complex V) produces ATP from ADP in the presence of a proton gradient across the membrane which is generated by electron transport complexes of the respiratory chain. F-type ATPases consist of two structural domains, F(1) - containing the extramembraneous catalytic core and F(0) - containing the membrane proton channel, linked together by a central stalk and a peripheral stalk. During catalysis, ATP synthesis in the catalytic domain of F(1) is coupled via a rotary mechanism of the central stalk subunits to proton translocation. Key component of the proton channel; it may play a direct role in the translocation of protons across the membrane. The polypeptide is ATP synthase subunit a (Zancudomyces culisetae (Gut fungus)).